Consider the following 122-residue polypeptide: Large ribosomal subunit protein uL14 (122 aa).

It belongs to the universal ribosomal protein uL14 family. As to quaternary structure, part of the 50S ribosomal subunit. Forms a cluster with proteins L3 and L19. In the 70S ribosome, L14 and L19 interact and together make contacts with the 16S rRNA in bridges B5 and B8.

Functionally, binds to 23S rRNA. Forms part of two intersubunit bridges in the 70S ribosome. In Rhodococcus jostii (strain RHA1), this protein is Large ribosomal subunit protein uL14.